A 234-amino-acid polypeptide reads, in one-letter code: Aspartate/glutamate leucyltransferase (234 aa).

Belongs to the R-transferase family. Bpt subfamily.

The protein resides in the cytoplasm. It carries out the reaction N-terminal L-glutamyl-[protein] + L-leucyl-tRNA(Leu) = N-terminal L-leucyl-L-glutamyl-[protein] + tRNA(Leu) + H(+). The catalysed reaction is N-terminal L-aspartyl-[protein] + L-leucyl-tRNA(Leu) = N-terminal L-leucyl-L-aspartyl-[protein] + tRNA(Leu) + H(+). In terms of biological role, functions in the N-end rule pathway of protein degradation where it conjugates Leu from its aminoacyl-tRNA to the N-termini of proteins containing an N-terminal aspartate or glutamate. In Hahella chejuensis (strain KCTC 2396), this protein is Aspartate/glutamate leucyltransferase.